Here is a 470-residue protein sequence, read N- to C-terminus: UDP-N-acetylmuramoylalanine--D-glutamate ligase (470 aa).

121–127 (GTNGKST) contributes to the ATP binding site.

Belongs to the MurCDEF family.

The protein localises to the cytoplasm. It carries out the reaction UDP-N-acetyl-alpha-D-muramoyl-L-alanine + D-glutamate + ATP = UDP-N-acetyl-alpha-D-muramoyl-L-alanyl-D-glutamate + ADP + phosphate + H(+). It functions in the pathway cell wall biogenesis; peptidoglycan biosynthesis. Its function is as follows. Cell wall formation. Catalyzes the addition of glutamate to the nucleotide precursor UDP-N-acetylmuramoyl-L-alanine (UMA). In Rhizobium johnstonii (strain DSM 114642 / LMG 32736 / 3841) (Rhizobium leguminosarum bv. viciae), this protein is UDP-N-acetylmuramoylalanine--D-glutamate ligase.